Consider the following 528-residue polypeptide: Glucose transporter 1E (528 aa).

A disordered region spans residues M1–A22. The Cytoplasmic segment spans residues M1 to Q43. A helical transmembrane segment spans residues V44–Y64. The Extracellular segment spans residues L65–S118. A helical membrane pass occupies residues V119–A139. Residues G140–S151 lie on the Cytoplasmic side of the membrane. Residues F152–Y172 form a helical membrane-spanning segment. At N173–Y175 the chain is on the extracellular side. A helical membrane pass occupies residues Y176 to F196. Residues P197 to G213 are Cytoplasmic-facing. A helical transmembrane segment spans residues V214 to L234. Residues D235–L250 lie on the Extracellular side of the membrane. A helical transmembrane segment spans residues H251–L271. Topologically, residues R272–L301 are cytoplasmic. Residues W302–V322 form a helical membrane-spanning segment. Residues M323 to S338 lie on the Extracellular side of the membrane. Residues L339–A359 traverse the membrane as a helical segment. Residues S360–M367 are Cytoplasmic-facing. The helical transmembrane segment at F368–F388 threads the bilayer. At P389 to T403 the chain is on the extracellular side. The helical transmembrane segment at G404–A424 threads the bilayer. Topologically, residues Q425 to S438 are cytoplasmic. The chain crosses the membrane as a helical span at residues F439 to T459. Residues E460–A475 lie on the Extracellular side of the membrane. A helical transmembrane segment spans residues V476 to L496. Residues Y497–N528 lie on the Cytoplasmic side of the membrane. The tract at residues N507 to N528 is disordered.

This sequence belongs to the major facilitator superfamily. Sugar transporter (TC 2.A.1.1) family.

It is found in the membrane. Facilitative glucose transporter. This is Glucose transporter 1E (THT1E) from Trypanosoma brucei brucei.